The primary structure comprises 244 residues: Flavin-dependent thymidylate synthase (244 aa).

The ThyX domain maps to 2–207; that stretch reads VRVTLVNYTK…DIRPIIKWAK (206 aa). FAD contacts are provided by residues Ser-56, 80 to 82, and Gln-88; that span reads RHR. DUMP-binding positions include 77-80, 88-92, and Arg-146; these read QLVR and QQSQR. A ThyX motif motif is present at residues 80–90; that stretch reads RHRIASYTQQS. Residues 162–164 and His-168 each bind FAD; that span reads NLR. Arg-173 provides a ligand contact to dUMP. Residue Arg-173 is the Involved in ionization of N3 of dUMP, leading to its activation of the active site.

The protein belongs to the thymidylate synthase ThyX family. Homotetramer. The cofactor is FAD.

The catalysed reaction is dUMP + (6R)-5,10-methylene-5,6,7,8-tetrahydrofolate + NADPH + H(+) = dTMP + (6S)-5,6,7,8-tetrahydrofolate + NADP(+). It functions in the pathway pyrimidine metabolism; dTTP biosynthesis. Functionally, catalyzes the reductive methylation of 2'-deoxyuridine-5'-monophosphate (dUMP) to 2'-deoxythymidine-5'-monophosphate (dTMP) while utilizing 5,10-methylenetetrahydrofolate (mTHF) as the methyl donor, and NADPH and FADH(2) as the reductant. This Pyrococcus furiosus (strain ATCC 43587 / DSM 3638 / JCM 8422 / Vc1) protein is Flavin-dependent thymidylate synthase.